A 636-amino-acid chain; its full sequence is Chaperone protein HtpG (636 aa).

The interval 1–345 (MSESATANAN…SSDLPLNVSR (345 aa)) is a; substrate-binding. Positions 346–562 (EILQQSKDID…EHDPSGNLAR (217 aa)) are b. The c stretch occupies residues 563-636 (LMKAAGQPMP…NDLMMALSAK (74 aa)).

It belongs to the heat shock protein 90 family. As to quaternary structure, homodimer.

The protein localises to the cytoplasm. In terms of biological role, molecular chaperone. Has ATPase activity. The sequence is that of Chaperone protein HtpG from Dechloromonas aromatica (strain RCB).